The primary structure comprises 250 residues: Neurotrophic factor BDNF precursor form (250 aa).

Positions Met1–Ala18 are cleaved as a signal peptide. Positions Ala19–Arg131 are excised as a propeptide. 3 disulfide bridges follow: Cys144/Cys211, Cys189/Cys240, and Cys199/Cys242.

It belongs to the NGF-beta family. In terms of assembly, monomers and homodimers. Binds to NTRK2/TRKB. Can form heterodimers with other neurotrophin family members, such as NTF3 and NTF4 (in vitro), but the physiological relevance of this is not clear. BDNF precursor form: interacts with the heterodimer formed by NGFR and SORCS2. Mature BDNF has much lower affinity for the heterodimer formed by NGFR and SORCS2. N-glycosylated and glycosulfated, contrary to mature BDNF. Post-translationally, mature BDNF is produced by proteolytic removal of the propeptide, catalyzed by a FURIN family member. In addition, the precursor form is proteolytically cleaved within the propeptide, but this is not an obligatory intermediate for the production of mature BDNF. Can be converted into mature BDNF by plasmin (PLG).

The protein localises to the secreted. Its function is as follows. Important signaling molecule that activates signaling cascades downstream of NTRK2. During development, promotes the survival and differentiation of selected neuronal populations of the peripheral and central nervous systems. Participates in axonal growth, pathfinding and in the modulation of dendritic growth and morphology. Major regulator of synaptic transmission and plasticity at adult synapses in many regions of the CNS. The versatility of BDNF is emphasized by its contribution to a range of adaptive neuronal responses including long-term potentiation (LTP), long-term depression (LTD), certain forms of short-term synaptic plasticity, as well as homeostatic regulation of intrinsic neuronal excitability. In terms of biological role, important signaling molecule that activates signaling cascades downstream of NTRK2. Activates signaling cascades via the heterodimeric receptor formed by NGFR and SORCS2. Signaling via NGFR and SORCS2 plays a role in synaptic plasticity and long-term depression (LTD). Binding to NGFR and SORCS2 promotes neuronal apoptosis. Promotes neuronal growth cone collapse. The protein is Neurotrophic factor BDNF precursor form (BDNF) of Bos taurus (Bovine).